The chain runs to 440 residues: Coenzyme A disulfide reductase (440 aa).

Position 8–33 (8–33 (GAVAGGATCASQIRRLDKDSEITIFE)) interacts with FAD. Positions 15, 19, 22, 39, and 42 each coordinate substrate. The Nucleophile role is filled by C43. C43 (redox-active) is an active-site residue. K71 is a binding site for substrate. 151-166 (ALVVGAGYISLEVLEN) contacts NADP(+). 267–277 (TNIPNIYALGD) is an FAD binding site. Residue H299 coordinates substrate. Residue Y419 coordinates FAD. Residue K427 participates in substrate binding.

Belongs to the class-III pyridine nucleotide-disulfide oxidoreductase family. As to quaternary structure, homodimer. It depends on FAD as a cofactor.

The catalysed reaction is NADP(+) + 2 CoA = CoA-disulfide + NADPH + H(+). Catalyzes specifically the NADPH-dependent reduction of coenzyme A disulfide. In Staphylococcus haemolyticus (strain JCSC1435), this protein is Coenzyme A disulfide reductase.